The primary structure comprises 196 residues: Agamous-like MADS-box protein AGL70 (196 aa).

The 61-residue stretch at 1-61 (MGRRKVEIKR…GKLYDSASGD (61 aa)) folds into the MADS-box domain. Residues 8 to 15 (IKRIENKS) carry the Nuclear localization signal motif. The K-box domain maps to 80-170 (ALDLAEKIRN…ASQVGKKTFL (91 aa)).

In terms of tissue distribution, mostly expressed in roots, leaves and flowers, and, to a lower extent, in inflorescence, siliques, pollen and shoots.

It localises to the nucleus. In terms of biological role, probable transcription factor involved in the negative regulation of flowering time, probably through the photoperiodic and vernalization pathways; more efficient in cv. Landsberg erecta than in cv. Columbia background. Prevents premature flowering. Involved in the modulation of vernalization impact on flowering according to genotype acclimation to altitude. In Arabidopsis thaliana (Mouse-ear cress), this protein is Agamous-like MADS-box protein AGL70.